The chain runs to 467 residues: Protein PHOSPHATE STARVATION RESPONSE 3 (467 aa).

The disordered stretch occupies residues 227-266; sequence MSLPVSSCSDQEDLQDARSPAKVQLSSSRSSSGTASCNKP. The 61-residue stretch at 262-322 folds into the HTH myb-type domain; sequence SCNKPRLRWT…HLQKYRLAKY (61 aa). Residues 293 to 318 constitute a DNA-binding region (H-T-H motif); the sequence is PKGVLKLMKVEGLTIYHIKSHLQKYR. Residues 327–337 are compositionally biased toward basic and acidic residues; it reads KEDKKQEEKKT. Disordered regions lie at residues 327–353 and 400–467; these read KEDK…KSAQ and RESI…VHDE. Positions 402 to 412 are enriched in polar residues; the sequence is SISSMTSTTEG. Basic and acidic residues-rich tracts occupy residues 419 to 428 and 438 to 467; these read PMEKTEDKAE and RITD…VHDE.

The protein resides in the nucleus. Functionally, transcription factor involved in phosphate starvation signaling. Binds to P1BS, an imperfect palindromic sequence 5'-GNATATNC-3', to promote the expression of inorganic phosphate (Pi) starvation-responsive genes. Functionally redundant with PHR1 and PHR2 in regulating Pi starvation response and Pi homeostasis. The sequence is that of Protein PHOSPHATE STARVATION RESPONSE 3 from Oryza sativa subsp. indica (Rice).